A 136-amino-acid polypeptide reads, in one-letter code: uncharacterized protein (136 aa).

It belongs to the MG439/MG440 family.

This is an uncharacterized protein from Mycoplasma pneumoniae (strain ATCC 29342 / M129 / Subtype 1) (Mycoplasmoides pneumoniae).